Consider the following 126-residue polypeptide: Glycine cleavage system H protein (126 aa).

A Lipoyl-binding domain is found at 24 to 106 (TITVGITDHA…YGEGWFFRMK (83 aa)). Lys65 carries the N6-lipoyllysine modification.

Belongs to the GcvH family. As to quaternary structure, the glycine cleavage system is composed of four proteins: P, T, L and H. (R)-lipoate serves as cofactor.

The glycine cleavage system catalyzes the degradation of glycine. The H protein shuttles the methylamine group of glycine from the P protein to the T protein. The polypeptide is Glycine cleavage system H protein (Psychrobacter arcticus (strain DSM 17307 / VKM B-2377 / 273-4)).